The following is a 370-amino-acid chain: Caffeic acid 3-O-methyltransferase (370 aa).

Residues 1–2 constitute a propeptide that is removed on maturation; that stretch reads MG. 135–141 is a binding site for substrate; that stretch reads MNQDKVL. The tract at residues 167 to 185 is substrate binding; it reads AFEYHGTDPRFNKVFNRGM. Residues G213, D236, D256, M257, and K270 each contribute to the S-adenosyl-L-methionine site. H274 serves as the catalytic Proton acceptor.

Belongs to the class I-like SAM-binding methyltransferase superfamily. Cation-independent O-methyltransferase family. COMT subfamily. In terms of assembly, homodimer.

It carries out the reaction (E)-caffeate + S-adenosyl-L-methionine = (E)-ferulate + S-adenosyl-L-homocysteine + H(+). It participates in aromatic compound metabolism; phenylpropanoid biosynthesis. Functionally, catalyzes the conversion of caffeic acid to ferulic acid and of 5-hydroxyferulic acid to sinapic acid. The resulting products may subsequently be converted to the corresponding alcohols that are incorporated into lignins. The sequence is that of Caffeic acid 3-O-methyltransferase (COMT) from Clarkia breweri (Fairy fans).